A 184-amino-acid chain; its full sequence is Peptide deformylase (184 aa).

Positions 92 and 134 each coordinate Fe cation. The active site involves glutamate 135. Residue histidine 138 coordinates Fe cation.

This sequence belongs to the polypeptide deformylase family. Fe(2+) serves as cofactor.

The catalysed reaction is N-terminal N-formyl-L-methionyl-[peptide] + H2O = N-terminal L-methionyl-[peptide] + formate. Functionally, removes the formyl group from the N-terminal Met of newly synthesized proteins. Requires at least a dipeptide for an efficient rate of reaction. N-terminal L-methionine is a prerequisite for activity but the enzyme has broad specificity at other positions. The polypeptide is Peptide deformylase (Psychrobacter arcticus (strain DSM 17307 / VKM B-2377 / 273-4)).